The primary structure comprises 195 residues: Ribonuclease HII (195 aa).

The region spanning 1 to 195 (MICGIDEAGR…SWRTLRYLNT (195 aa)) is the RNase H type-2 domain. The a divalent metal cation site is built by D6, E7, and D101.

It belongs to the RNase HII family. It depends on Mn(2+) as a cofactor. Mg(2+) is required as a cofactor.

The protein resides in the cytoplasm. It carries out the reaction Endonucleolytic cleavage to 5'-phosphomonoester.. Functionally, endonuclease that specifically degrades the RNA of RNA-DNA hybrids. This Pyrobaculum islandicum (strain DSM 4184 / JCM 9189 / GEO3) protein is Ribonuclease HII.